A 217-amino-acid polypeptide reads, in one-letter code: Ribonuclease T (217 aa).

The Exonuclease domain maps to valine 20 to phenylalanine 194. Residues aspartate 23, glutamate 25, histidine 181, and aspartate 186 each coordinate Mg(2+). Catalysis depends on histidine 181, which acts as the Proton donor/acceptor.

It belongs to the RNase T family. Homodimer. Requires Mg(2+) as cofactor.

In terms of biological role, trims short 3' overhangs of a variety of RNA species, leaving a one or two nucleotide 3' overhang. Responsible for the end-turnover of tRNA: specifically removes the terminal AMP residue from uncharged tRNA (tRNA-C-C-A). Also appears to be involved in tRNA biosynthesis. The sequence is that of Ribonuclease T from Buchnera aphidicola subsp. Baizongia pistaciae (strain Bp).